We begin with the raw amino-acid sequence, 104 residues long: Transcription factor ILI1 (104 aa).

Positions 1 to 11 (MSSSRRSRSRR) are enriched in basic residues. Residues 1 to 27 (MSSSRRSRSRRAGSSVPSSSSSSRTSI) are disordered. Positions 12-27 (AGSSVPSSSSSSRTSI) are enriched in low complexity. The bHLH domain maps to 16–71 (VPSSSSSSRTSISEDQIAELLSKLQALLPESQARNGAHRGSAARVLQETCSYIRSL).

The protein belongs to the bHLH protein family. As to quaternary structure, interacts with IBH1.

Functionally, atypical and probable non DNA-binding bHLH transcription factor that acts as a positive regulator of cell elongation and plant development. Binds the transcription repressor IBH1 and forms a heterodimer of antagonistic bHLH transcription factors that function downstream of BZR1 to mediate brassinosteroid regulation of cell elongation and lamina inclination. This Oryza sativa subsp. indica (Rice) protein is Transcription factor ILI1 (ILI1).